The sequence spans 389 residues: Sulfate adenylyltransferase (389 aa).

This sequence belongs to the sulfate adenylyltransferase family.

The catalysed reaction is sulfate + ATP + H(+) = adenosine 5'-phosphosulfate + diphosphate. The protein operates within sulfur metabolism; hydrogen sulfide biosynthesis; sulfite from sulfate: step 1/3. The protein is Sulfate adenylyltransferase of Deinococcus deserti (strain DSM 17065 / CIP 109153 / LMG 22923 / VCD115).